The chain runs to 119 residues: MFKKNDRSQSRERRHMRVRKKIFGTAERPRLSVYRSEKHIYAQLIDDVEGKTLVAASSAEQGFDGVGSNKEGAKLVGKMVAEKALEKGLKKVVFDRGGFIYHGRIKELAEGAREAGLDF.

It belongs to the universal ribosomal protein uL18 family. In terms of assembly, part of the 50S ribosomal subunit; part of the 5S rRNA/L5/L18/L25 subcomplex. Contacts the 5S and 23S rRNAs.

This is one of the proteins that bind and probably mediate the attachment of the 5S RNA into the large ribosomal subunit, where it forms part of the central protuberance. This chain is Large ribosomal subunit protein uL18, found in Clostridium botulinum (strain Okra / Type B1).